The following is an 813-amino-acid chain: Kinesin-like protein KIN-8B (813 aa).

The Kinesin motor domain maps to 14–345; it reads TLTVAVKCRP…LKYADRAKEI (332 aa). 104–111 is an ATP binding site; that stretch reads GSTGSGKT. Residues 349–391 adopt a coiled-coil conformation; the sequence is IQKNIGTIDTHMSDYQRMIDNLQSEVSQLKTQLAEKESQLSIK. 2 disordered regions span residues 664–694 and 756–813; these read GSRP…PRMA and AVST…RQHQ. Composition is skewed to polar residues over residues 682–694, 761–791, and 804–813; these read YPQT…PRMA, GARN…NSHT, and KGNNTQRQHQ.

Belongs to the TRAFAC class myosin-kinesin ATPase superfamily. Kinesin family. KIN-8 subfamily.

The chain is Kinesin-like protein KIN-8B from Arabidopsis thaliana (Mouse-ear cress).